The primary structure comprises 514 residues: MIPDVSQALAWLEKHPQALKGIQRGLERETLRVNADGSLATTGHPESLGSALTHKWITTDFAEALLEFITPVDGDIDHMLTLMRDVHRYTARQLGDERMWPLSMPCYIEQGQDIELAQYGTSNIGRLKTLYREGLKNRYGALMQTISGVHYNFSLPMAFWQAKCGETDKEAISAGYFRLIRNYYRFGWVIPYLFGASPAICSSFLQGKPTTLPFEKTDCGMYYLPYATSLRLSDLGYTNKSQSNLGITFNDLHEYVAGLKRAIKTPSEEYETIGLEKDGKRLQINSNVLQIENELYAPIRPKRVTRSGEAPSDALERGGIEYIEVRSLDINPFSPIGVDEQQIRFLDLFMVWCVLADAPEMSSDELLCTRTNWNRVILEGRKPGLTLGIGCETAQFPLAKVGKDLFRDLKRVAQTMDSLYGGEEYQKVCDQLVESFDNPELTFSARILRSMIDQGIGGTGRTLAAQYRDMLQQEPLEVLSEEDFVAEREASIARQREVEAGDTESFEAFLAKHA.

This sequence belongs to the glutamate--cysteine ligase type 1 family. Type 1 subfamily.

The enzyme catalyses L-cysteine + L-glutamate + ATP = gamma-L-glutamyl-L-cysteine + ADP + phosphate + H(+). The protein operates within sulfur metabolism; glutathione biosynthesis; glutathione from L-cysteine and L-glutamate: step 1/2. In Enterobacter sp. (strain 638), this protein is Glutamate--cysteine ligase.